The primary structure comprises 635 residues: MSQTTTTSASETLGFQAEVKQLLHLMIHSLYSNKEIFLRELVSNASDACDKLRFEAIDQPGLLEGDGELAIRVGYDKAARTITISDNGIGLSRDEAVANLGTIARSGTREFFSQLTGDKQKDAQLIGQFGVGFYSSFIVADKVTVLSRRAGLAANEAIRWESDGQGEFSIAPAEKAGRGTDVVLHLRADEDELLNGWKLREILRRYSDHISLPIRMAKEDWDAEKGEQVKGDELETVNQANALWTRNKSDITDEQYREFYKTVSHDYDDPLAWTHNRVEGRSEYTQLLYVPKHAPFDLWDRDARRGVKLYVKRVFIMDDAEQLLPSYLRFVRGVIDSADLPLNVSREILQESRDVRAIREGSAKRVLSLLEDMAENKAEDYATFWTEFGQVLKEGTGEDAANRERIARLLRFASTHDGEQAQTVSFADYVGRMKDGQDKIYYVTADTFTAAANSPHLEIFRKKGIEVLLLSDRVDEWMLSYLREFDGKSLVSVAKGGLDLAELADEEEKKRQSEVAETFKPLVERLQQALAEQVKEVRVTQRLVDSPACVVVGQNELSPHLLRMLKAAGQEAPEVKPVLEINPDHALVARIRDASDAEFGDWAALLLDQALLAEGAQIADPAAFVKRLNGLLLKA.

The a; substrate-binding stretch occupies residues 1-346 (MSQTTTTSAS…SADLPLNVSR (346 aa)). The tract at residues 347-563 (EILQESRDVR…QNELSPHLLR (217 aa)) is b. Residues 564–635 (MLKAAGQEAP…KRLNGLLLKA (72 aa)) are c.

The protein belongs to the heat shock protein 90 family. Homodimer.

The protein localises to the cytoplasm. Molecular chaperone. Has ATPase activity. This chain is Chaperone protein HtpG, found in Bordetella pertussis (strain Tohama I / ATCC BAA-589 / NCTC 13251).